We begin with the raw amino-acid sequence, 134 residues long: Profilin-1 (134 aa).

The cysteines at positions 13 and 118 are disulfide-linked. The Involved in PIP2 interaction signature appears at 84–100; that stretch reads AVIRGKKGSGGITTKKT. The residue at position 114 (T114) is a Phosphothreonine.

Belongs to the profilin family. In terms of assembly, occurs in many kinds of cells as a complex with monomeric actin in a 1:1 ratio. Phosphorylated by MAP kinases.

Its subcellular location is the cytoplasm. The protein resides in the cytoskeleton. Binds to actin and affects the structure of the cytoskeleton. At high concentrations, profilin prevents the polymerization of actin, whereas it enhances it at low concentrations. This is Profilin-1 from Olea europaea (Common olive).